The following is a 313-amino-acid chain: WD repeat-containing protein 82-A (313 aa).

WD repeat units lie at residues 19 to 58 (ENSD…PKRT), 105 to 144 (GHSK…CQGL), 146 to 184 (HLQG…KGPF), 192 to 231 (DRTC…VMHT), 236 to 276 (NNSK…KVAV), and 280 to 313 (KHTG…TIDD).

Belongs to the WD repeat SWD2 family. As to quaternary structure, component of the SET1/COMPASS complex. Component of the PNUTS-PP1 phosphatase complex.

Its subcellular location is the nucleus. It is found in the chromosome. It localises to the cytoplasm. Regulatory component of the SET1/COMPASS complex implicated in the tethering of this complex to transcriptional start sites of active genes. Facilitates histone H3 'Lys-4' methylation (H3K4me) via recruitment of the SETD1A or SETD1B to the 'Ser-5' phosphorylated C-terminal domain (CTD) of RNA polymerase II large subunit (POLR2A). Component of the PNUTS-PP1 protein phosphatase complex, a protein phosphatase 1 (PP1) complex that promotes RNA polymerase II transcription pause-release, allowing transcription elongation. The polypeptide is WD repeat-containing protein 82-A (wdr82-a) (Xenopus laevis (African clawed frog)).